Here is a 164-residue protein sequence, read N- to C-terminus: Endoribonuclease YbeY (164 aa).

Residues histidine 114, histidine 118, and histidine 124 each coordinate Zn(2+).

It belongs to the endoribonuclease YbeY family. Requires Zn(2+) as cofactor.

The protein localises to the cytoplasm. Its function is as follows. Single strand-specific metallo-endoribonuclease involved in late-stage 70S ribosome quality control and in maturation of the 3' terminus of the 16S rRNA. The protein is Endoribonuclease YbeY of Mycoplasmoides gallisepticum (strain R(low / passage 15 / clone 2)) (Mycoplasma gallisepticum).